Here is a 599-residue protein sequence, read N- to C-terminus: Kelch repeat and BTB domain-containing protein 8 (599 aa).

Residues 1 to 25 form a disordered region; it reads MAASADLSKSSPTPNGIPSSDTAND. Over residues 7 to 25 the composition is skewed to polar residues; it reads LSKSSPTPNGIPSSDTAND. Residues 49 to 117 form the BTB domain; the sequence is TDIVVEVDHG…AYTSRVILTE (69 aa). The BACK domain occupies 152 to 254; the sequence is SIGVFIFADH…MEDTFIEKIP (103 aa). 5 Kelch repeats span residues 334 to 388, 389 to 439, 441 to 479, 481 to 530, and 540 to 586; these read DIYI…YCCG, KMYA…EHKE, IYVLQGEFFLFYEPQKDYWGFLTPMTVPRIQGLAAVYKD, IYYI…LFQN, and QVTV…FECA.

The protein belongs to the KBTBD8 family. In terms of assembly, component of the BCR(KBTBD8) E3 ubiquitin ligase complex, at least composed of CUL3, KBTBD8 and RBX1.

It is found in the cytoplasm. It localises to the cytoskeleton. The protein resides in the spindle. Its subcellular location is the golgi apparatus. Its function is as follows. Substrate-specific adapter of a BCR (BTB-CUL3-RBX1) E3 ubiquitin ligase complex that acts as a regulator of neural crest specification. The BCR(KBTBD8) complex acts by mediating monoubiquitination of NOLC1 and TCOF1: monoubiquitination promotes the formation of a NOLC1-TCOF1 complex that acts as a platform to connect RNA polymerase I with enzymes responsible for ribosomal processing and modification, leading to remodel the translational program of differentiating cells in favor of neural crest specification. This chain is Kelch repeat and BTB domain-containing protein 8 (Kbtbd8), found in Mus musculus (Mouse).